The chain runs to 608 residues: MGKPPRAMTPVEEVDLSAVRYQSPSLQAPHLTGFSLRAFVWLMESPLFGRLLTSVLKSQNNITRMLQDTVIPERPMYLPEYPPQEPEQGVLLLGDDRDPVDRVEEALHCLPPYDPSLRWPAGDKPPFLYWKIRDFAHAYRSGITTPSVVAEHIIAGVEEWSNKKPPMPMLVYFNADDLRKQAEASTKRFQQGNPISILDGIFIAIKDDIDCFPYPSKGATTFFDKIRSVEKDAVCVARLRKCGVLFIGKANMHELGLGVTGNNPNYGTARNPHSIDRYTGGSSSGPAALVSSGLCSAAIGTDGGGSVRIPSSLCGIIGLKTTYGRTDMTGALCDCGTVEVASPLAASVEDALLVYSAIAGSRPMDKLTLRPSPLCVPNLVSPDNNNILGSVKIGKYTEWFHDVSDRDISNTCEDALNLLCSSFGCQIEEIILPELEEMRTAHVVSIGTESFCDLNPHYRAGKRTEFTLDTRTSLALFGSFTSTDYVASQRIRRRIMYYHNEAFKKVDVIATPTTGITAPEIPQSSLKLGESNYVVSAYLMRFVIAGNLLGLPAITVPVGHDKQGLPIGLQLIGRPWGEASLLRVASAIEELCLKKRKRPSAFHDILNA.

Catalysis depends on charge relay system residues Lys-206 and Ser-282. Position 303–306 (303–306 (GGGS)) interacts with substrate. Residue Ser-306 is the Acyl-ester intermediate of the active site.

This sequence belongs to the amidase family. Forms homodimers.

The protein resides in the endoplasmic reticulum membrane. Its subcellular location is the cell membrane. The enzyme catalyses N-(9Z,12Z-octadecadienoyl)-ethanolamine + H2O = ethanolamine + (9Z,12Z)-octadecadienoate. It catalyses the reaction N-hexadecanoylethanolamine + H2O = ethanolamine + hexadecanoate. It carries out the reaction N-dodecanoylethanolamine + H2O = dodecanoate + ethanolamine. Its activity is regulated as follows. Inhibited by methyl arachidonyl fluorophosphonate (MAFP). In terms of biological role, catalyzes the hydrolysis of bioactive endogenous fatty acid amides to their corresponding acids. The hydrolysis of endogenous amidated lipids terminates their participation as lipid mediators in various signaling systems. Converts a wide range of N-acylethanolamines (NAEs) to their corresponding free fatty acids and ethanolamine. The sequence is that of Fatty acid amide hydrolase from Oryza sativa subsp. indica (Rice).